Consider the following 349-residue polypeptide: Isopentenyl-diphosphate delta-isomerase (349 aa).

6 to 7 (RK) provides a ligand contact to substrate. FMN contacts are provided by residues 62-64 (AMT), Ser-93, and Asn-122. Gln-152 contributes to the substrate binding site. A Mg(2+)-binding site is contributed by Glu-153. FMN-binding positions include Lys-184, Thr-214, 258–259 (GG), and 280–281 (AG).

Belongs to the IPP isomerase type 2 family. As to quaternary structure, homooctamer. Dimer of tetramers. The cofactor is FMN. NADPH is required as a cofactor. Mg(2+) serves as cofactor.

The protein localises to the cytoplasm. It carries out the reaction isopentenyl diphosphate = dimethylallyl diphosphate. Functionally, involved in the biosynthesis of isoprenoids. Catalyzes the 1,3-allylic rearrangement of the homoallylic substrate isopentenyl (IPP) to its allylic isomer, dimethylallyl diphosphate (DMAPP). This chain is Isopentenyl-diphosphate delta-isomerase, found in Bacillus licheniformis (strain ATCC 14580 / DSM 13 / JCM 2505 / CCUG 7422 / NBRC 12200 / NCIMB 9375 / NCTC 10341 / NRRL NRS-1264 / Gibson 46).